Here is a 78-residue protein sequence, read N- to C-terminus: MTHQKHHPDDRSDNVEKLQDMVQNTIENIEESEEQLSFASEAEQEQIREKNERRNESIEAMRNEIHDEAEARKNGYHQ.

The tract at residues 32–78 (SEEQLSFASEAEQEQIREKNERRNESIEAMRNEIHDEAEARKNGYHQ) is disordered. Residues 45 to 78 (EQIREKNERRNESIEAMRNEIHDEAEARKNGYHQ) are compositionally biased toward basic and acidic residues.

This sequence belongs to the Tlp family.

The protein resides in the spore core. This is Small, acid-soluble spore protein Tlp from Bacillus licheniformis (strain ATCC 14580 / DSM 13 / JCM 2505 / CCUG 7422 / NBRC 12200 / NCIMB 9375 / NCTC 10341 / NRRL NRS-1264 / Gibson 46).